Reading from the N-terminus, the 241-residue chain is 1-(5-phosphoribosyl)-5-[(5-phosphoribosylamino)methylideneamino] imidazole-4-carboxamide isomerase (241 aa).

The active-site Proton acceptor is Asp8. Asp129 acts as the Proton donor in catalysis.

The protein belongs to the HisA/HisF family.

It localises to the cytoplasm. The enzyme catalyses 1-(5-phospho-beta-D-ribosyl)-5-[(5-phospho-beta-D-ribosylamino)methylideneamino]imidazole-4-carboxamide = 5-[(5-phospho-1-deoxy-D-ribulos-1-ylimino)methylamino]-1-(5-phospho-beta-D-ribosyl)imidazole-4-carboxamide. Its pathway is amino-acid biosynthesis; L-histidine biosynthesis; L-histidine from 5-phospho-alpha-D-ribose 1-diphosphate: step 4/9. In Chloroflexus aggregans (strain MD-66 / DSM 9485), this protein is 1-(5-phosphoribosyl)-5-[(5-phosphoribosylamino)methylideneamino] imidazole-4-carboxamide isomerase.